Reading from the N-terminus, the 376-residue chain is Mitogen-activated protein kinase 6 (376 aa).

A Protein kinase domain is found at 43 to 329; that stretch reads APPIRPIGRG…VDEALHHPYL (287 aa). ATP is bound by residues 49–57 and K72; that span reads IGRGAYGIV. D169 functions as the Proton acceptor in the catalytic mechanism. At T201 the chain carries Phosphothreonine. The short motif at 201 to 203 is the TXY element; that stretch reads TEY. A Phosphotyrosine modification is found at Y203.

This sequence belongs to the protein kinase superfamily. CMGC Ser/Thr protein kinase family. MAP kinase subfamily. Post-translationally, dually phosphorylated on Thr-201 and Tyr-203, which activates the enzyme.

It carries out the reaction L-seryl-[protein] + ATP = O-phospho-L-seryl-[protein] + ADP + H(+). The catalysed reaction is L-threonyl-[protein] + ATP = O-phospho-L-threonyl-[protein] + ADP + H(+). With respect to regulation, activated by threonine and tyrosine phosphorylation. The polypeptide is Mitogen-activated protein kinase 6 (MPK6) (Oryza sativa subsp. japonica (Rice)).